The chain runs to 637 residues: Anthranilate synthase, phenazine specific (637 aa).

The interval 1-434 (MSQAAARLME…QRQQTQSDFS (434 aa)) is anthranilate synthase component I. The Glutamine amidotransferase type-1 domain maps to 437–628 (QVLIVDAEDT…LRHALIHTPV (192 aa)). Residues C517, H602, and E604 each act as for GATase activity in the active site.

It carries out the reaction chorismate + L-glutamine = anthranilate + pyruvate + L-glutamate + H(+). It functions in the pathway antibiotic biosynthesis; phenazine biosynthesis. Functionally, involved in the biosynthesis of the antibiotic, phenazine, a nitrogen-containing heterocyclic molecule having important roles in virulence, competition and biological control. The sequence is that of Anthranilate synthase, phenazine specific (phzE) from Pseudomonas fluorescens.